We begin with the raw amino-acid sequence, 176 residues long: ATP synthase subunit b (176 aa).

The helical transmembrane segment at 18–38 (FGLDATVWVSIAMLVFLGILV) threads the bilayer.

The protein belongs to the ATPase B chain family. As to quaternary structure, F-type ATPases have 2 components, F(1) - the catalytic core - and F(0) - the membrane proton channel. F(1) has five subunits: alpha(3), beta(3), gamma(1), delta(1), epsilon(1). F(0) has three main subunits: a(1), b(2) and c(10-14). The alpha and beta chains form an alternating ring which encloses part of the gamma chain. F(1) is attached to F(0) by a central stalk formed by the gamma and epsilon chains, while a peripheral stalk is formed by the delta and b chains.

The protein resides in the cell inner membrane. In terms of biological role, f(1)F(0) ATP synthase produces ATP from ADP in the presence of a proton or sodium gradient. F-type ATPases consist of two structural domains, F(1) containing the extramembraneous catalytic core and F(0) containing the membrane proton channel, linked together by a central stalk and a peripheral stalk. During catalysis, ATP synthesis in the catalytic domain of F(1) is coupled via a rotary mechanism of the central stalk subunits to proton translocation. Its function is as follows. Component of the F(0) channel, it forms part of the peripheral stalk, linking F(1) to F(0). This Sphingopyxis alaskensis (strain DSM 13593 / LMG 18877 / RB2256) (Sphingomonas alaskensis) protein is ATP synthase subunit b.